The chain runs to 133 residues: Succinate dehydrogenase assembly factor 3, mitochondrial (133 aa).

A mitochondrion-targeting transit peptide spans 1–12 (MNNKLIYRSVRF).

Belongs to the complex I LYR family. SDHAF3 subfamily. As to quaternary structure, interacts with SDH2 within an SDH1-SDH2 subcomplex.

It is found in the mitochondrion. The protein resides in the mitochondrion intermembrane space. Its subcellular location is the mitochondrion matrix. Plays an essential role in the assembly of succinate dehydrogenase (SDH), an enzyme complex (also referred to as respiratory complex II) that is a component of both the tricarboxylic acid (TCA) cycle and the mitochondrial electron transport chain, and which couples the oxidation of succinate to fumarate with the reduction of ubiquinone (coenzyme Q) to ubiquinol. Promotes maturation of the iron-sulfur protein subunit SDH2 of the SDH catalytic dimer, protecting it from the deleterious effects of oxidants. Acts together with SDHAF1 (SDH6). The sequence is that of Succinate dehydrogenase assembly factor 3, mitochondrial from Saccharomyces cerevisiae (strain ATCC 204508 / S288c) (Baker's yeast).